The chain runs to 33 residues: Protein YdgV (33 aa).

The sequence is that of Protein YdgV from Escherichia coli (strain K12).